The sequence spans 430 residues: Tektin-2 (430 aa).

Coiled-coil stretches lie at residues 75–162 (KETL…FQHL) and 226–380 (KNRA…IACK).

Belongs to the tektin family. As to quaternary structure, microtubule inner protein component of sperm flagellar doublet microtubules. May interact with CCDC172. Ubiquitinated, leading to its degradation. Deubiquitinated by USP16, promoting its stability. Post-translationally, tyrosine phosphorylated. Expressed in the testes (at protein level).

The protein resides in the cytoplasm. It is found in the cytoskeleton. It localises to the cilium axoneme. The protein localises to the flagellum axoneme. Its subcellular location is the microtubule organizing center. Its function is as follows. Microtubule inner protein (MIP) part of the dynein-decorated doublet microtubules (DMTs) in cilia and flagellar axoneme. Plays a key role in the assembly or attachment of the inner dynein arm to microtubules in sperm flagella and tracheal cilia. Forms filamentous polymers in the walls of ciliary and flagellar microtubules. The polypeptide is Tektin-2 (Tekt2) (Mus musculus (Mouse)).